Consider the following 163-residue polypeptide: Staphylokinase (163 aa).

Residues 1-27 (MLKRSLLFLTVLLLLFSFSSITNEVSA) form the signal peptide.

It belongs to the staphylokinase family.

Its subcellular location is the secreted. Functionally, potent plasminogen activator that converts plasminogen into plasmin. It forms a 1:1 complex with plasmin, which in turn activates other plasminogen molecules. The protein is Staphylokinase (sak) of Staphylococcus aureus (Bacteriophage P42D).